Reading from the N-terminus, the 244-residue chain is 5-oxoprolinase subunit A (244 aa).

It belongs to the LamB/PxpA family. In terms of assembly, forms a complex composed of PxpA, PxpB and PxpC.

The catalysed reaction is 5-oxo-L-proline + ATP + 2 H2O = L-glutamate + ADP + phosphate + H(+). Functionally, catalyzes the cleavage of 5-oxoproline to form L-glutamate coupled to the hydrolysis of ATP to ADP and inorganic phosphate. The protein is 5-oxoprolinase subunit A of Salmonella newport (strain SL254).